An 86-amino-acid chain; its full sequence is Small ribosomal subunit protein bS20 (86 aa).

Residues 1–11 show a composition bias toward basic residues; it reads MANIKQQKKRN. The segment at 1-21 is disordered; sequence MANIKQQKKRNKTNEKRRLQN.

The protein belongs to the bacterial ribosomal protein bS20 family.

Its function is as follows. Binds directly to 16S ribosomal RNA. In Onion yellows phytoplasma (strain OY-M), this protein is Small ribosomal subunit protein bS20.